Reading from the N-terminus, the 311-residue chain is Probable inactive peptidyl-prolyl cis-trans isomerase-like 6 (311 aa).

The 164-residue stretch at 145 to 308 folds into the PPIase cyclophilin-type domain; sequence FLDICIDSSP…HMCRITDSGD (164 aa).

Belongs to the cyclophilin-type PPIase family.

Its function is as follows. Probable inactive PPIase with no peptidyl-prolyl cis-trans isomerase activity. This chain is Probable inactive peptidyl-prolyl cis-trans isomerase-like 6, found in Homo sapiens (Human).